The sequence spans 302 residues: Homoserine O-acetyltransferase (302 aa).

The active-site Acyl-thioester intermediate is the cysteine 142. Residues lysine 163 and serine 192 each coordinate substrate. The active-site Proton acceptor is histidine 235. Residue glutamate 237 is part of the active site. A substrate-binding site is contributed by arginine 249.

Belongs to the MetA family.

The protein localises to the cytoplasm. The enzyme catalyses L-homoserine + acetyl-CoA = O-acetyl-L-homoserine + CoA. It functions in the pathway amino-acid biosynthesis; L-methionine biosynthesis via de novo pathway; O-acetyl-L-homoserine from L-homoserine: step 1/1. In terms of biological role, transfers an acetyl group from acetyl-CoA to L-homoserine, forming acetyl-L-homoserine. The protein is Homoserine O-acetyltransferase of Geobacillus kaustophilus.